Reading from the N-terminus, the 405-residue chain is Argininosuccinate synthase (405 aa).

ATP-binding positions include 10–18 (AYSGGLDTS) and Ala-37. 2 residues coordinate L-citrulline: Tyr-88 and Ser-93. Gly-118 is a binding site for ATP. The L-aspartate site is built by Thr-120, Asn-124, and Asp-125. Asn-124 contacts L-citrulline. Residues Arg-128, Ser-179, Ser-188, Glu-264, and Tyr-276 each contribute to the L-citrulline site.

This sequence belongs to the argininosuccinate synthase family. Type 1 subfamily. As to quaternary structure, homotetramer.

The protein localises to the cytoplasm. It catalyses the reaction L-citrulline + L-aspartate + ATP = 2-(N(omega)-L-arginino)succinate + AMP + diphosphate + H(+). It functions in the pathway amino-acid biosynthesis; L-arginine biosynthesis; L-arginine from L-ornithine and carbamoyl phosphate: step 2/3. The chain is Argininosuccinate synthase from Pseudomonas aeruginosa (strain LESB58).